The chain runs to 227 residues: Uracil-DNA glycosylase (227 aa).

Aspartate 68 (proton acceptor) is an active-site residue.

It belongs to the uracil-DNA glycosylase (UDG) superfamily. UNG family.

It is found in the cytoplasm. It carries out the reaction Hydrolyzes single-stranded DNA or mismatched double-stranded DNA and polynucleotides, releasing free uracil.. In terms of biological role, excises uracil residues from the DNA which can arise as a result of misincorporation of dUMP residues by DNA polymerase or due to deamination of cytosine. This chain is Uracil-DNA glycosylase, found in Mycobacterium ulcerans (strain Agy99).